The primary structure comprises 211 residues: 5-formyltetrahydrofolate cyclo-ligase (211 aa).

An ATP-binding site is contributed by 4–8; it reads KQLLR. Substrate-binding positions include E56 and 152–156; that span reads HGAGY. Residues 151–158 and D194 contribute to the ATP site; that span reads GHGAGYYD.

This sequence belongs to the 5-formyltetrahydrofolate cyclo-ligase family. Post-translationally, N-glycosylated.

The protein resides in the mitochondrion. The catalysed reaction is (6S)-5-formyl-5,6,7,8-tetrahydrofolate + ATP = (6R)-5,10-methenyltetrahydrofolate + ADP + phosphate. Only enzyme known to utilize 5-formyltetrahydrofolate (folinic acid) as substrate. Contributes to tetrahydrofolate metabolism in an alternative way of folate biosynthesis. May regulate carbon flow through the folate-dependent one-carbon metabolic network that supplies carbon for the biosynthesis of purines, thymidine and amino acids. The sequence is that of 5-formyltetrahydrofolate cyclo-ligase (FAU1) from Saccharomyces cerevisiae (strain ATCC 204508 / S288c) (Baker's yeast).